The sequence spans 275 residues: Integrase homolog (275 aa).

Residues 88–111 show a composition bias toward basic and acidic residues; the sequence is RVSQDRQAQGRERRSVLLPQERRG. A disordered region spans residues 88–120; the sequence is RVSQDRQAQGRERRSVLLPQERRGSSGRQPLYS.

It belongs to the 'phage' integrase family.

Functionally, integrase-recombinase proteins are responsible for catalyzing strand exchange between DNA molecules and play an important role in the DNA replication. Its function is as follows. May be required for the formation of concatameric complex replicative intermediates and/or their resolution before encapsidation. This chain is Integrase homolog (INT), found in Dryophytes versicolor (chameleon treefrog).